Reading from the N-terminus, the 254-residue chain is 5'/3'-nucleotidase SurE (254 aa).

Asp-9, Asp-10, Ser-40, and Asn-93 together coordinate a divalent metal cation.

Belongs to the SurE nucleotidase family. It depends on a divalent metal cation as a cofactor.

The protein localises to the cytoplasm. It carries out the reaction a ribonucleoside 5'-phosphate + H2O = a ribonucleoside + phosphate. The enzyme catalyses a ribonucleoside 3'-phosphate + H2O = a ribonucleoside + phosphate. The catalysed reaction is [phosphate](n) + H2O = [phosphate](n-1) + phosphate + H(+). Functionally, nucleotidase with a broad substrate specificity as it can dephosphorylate various ribo- and deoxyribonucleoside 5'-monophosphates and ribonucleoside 3'-monophosphates with highest affinity to 3'-AMP. Also hydrolyzes polyphosphate (exopolyphosphatase activity) with the preference for short-chain-length substrates (P20-25). Might be involved in the regulation of dNTP and NTP pools, and in the turnover of 3'-mononucleotides produced by numerous intracellular RNases (T1, T2, and F) during the degradation of various RNAs. The chain is 5'/3'-nucleotidase SurE from Yersinia pestis bv. Antiqua (strain Antiqua).